The primary structure comprises 161 residues: Pathogenesis-related protein 1 (161 aa).

Residues Met-1 to Ala-26 form the signal peptide. The 116-residue stretch at Val-34–Tyr-149 folds into the SCP domain. 3 cysteine pairs are disulfide-bonded: Cys-70–Cys-138, Cys-113–Cys-117, and Cys-133–Cys-147.

Belongs to the CRISP family. As to expression, expressed in flowers, stems and roots but not in leaves.

Its function is as follows. Probably involved in the defense reaction of plants against pathogens. In Arabidopsis thaliana (Mouse-ear cress), this protein is Pathogenesis-related protein 1.